A 79-amino-acid polypeptide reads, in one-letter code: CDC42 small effector protein 1 (79 aa).

Residues Cys-10 and Cys-11 are each lipidated (S-palmitoyl cysteine). The 14-residue stretch at Ile-30–Gly-43 folds into the CRIB domain. The disordered stretch occupies residues His-41–Leu-79. Residues Met-63–Gln-72 are compositionally biased toward basic and acidic residues.

It belongs to the CDC42SE/SPEC family.

The protein localises to the cytoplasm. It is found in the cytoskeleton. The protein resides in the cell membrane. Functionally, probably involved in the organization of the actin cytoskeleton by acting downstream of CDC42, inducing actin filament assembly. The sequence is that of CDC42 small effector protein 1 (cdc42se1) from Xenopus tropicalis (Western clawed frog).